The following is a 318-amino-acid chain: Ribosomal RNA small subunit methyltransferase H (318 aa).

Residues 34 to 36 (GGY), D52, F79, D100, and Q107 each bind S-adenosyl-L-methionine. The disordered stretch occupies residues 286–318 (GPAPDEARANPRARSAKLRAAARTAAPAWETVS). The span at 303 to 318 (LRAAARTAAPAWETVS) shows a compositional bias: low complexity.

This sequence belongs to the methyltransferase superfamily. RsmH family.

The protein resides in the cytoplasm. It carries out the reaction cytidine(1402) in 16S rRNA + S-adenosyl-L-methionine = N(4)-methylcytidine(1402) in 16S rRNA + S-adenosyl-L-homocysteine + H(+). In terms of biological role, specifically methylates the N4 position of cytidine in position 1402 (C1402) of 16S rRNA. The chain is Ribosomal RNA small subunit methyltransferase H from Paramagnetospirillum magneticum (strain ATCC 700264 / AMB-1) (Magnetospirillum magneticum).